A 366-amino-acid chain; its full sequence is Outer membrane porin C 2 (366 aa).

An N-terminal signal peptide occupies residues 1–21 (MKLKIVAVVVTGLLAANVAHA).

This sequence belongs to the Gram-negative porin family. Homotrimer. Forms mixed heterotrimers with OmpF and with PhoE; other mixed heterotrimers are also probable.

Its subcellular location is the cell outer membrane. In terms of biological role, forms pores that allow passive diffusion of small molecules across the outer membrane. Plays a role in virulence. The protein is Outer membrane porin C 2 of Shigella flexneri serotype 5a (strain M90T).